The sequence spans 511 residues: Bifunctional purine biosynthesis protein PurH (511 aa).

The MGS-like domain maps to M1–V145.

Belongs to the PurH family.

The catalysed reaction is (6R)-10-formyltetrahydrofolate + 5-amino-1-(5-phospho-beta-D-ribosyl)imidazole-4-carboxamide = 5-formamido-1-(5-phospho-D-ribosyl)imidazole-4-carboxamide + (6S)-5,6,7,8-tetrahydrofolate. The enzyme catalyses IMP + H2O = 5-formamido-1-(5-phospho-D-ribosyl)imidazole-4-carboxamide. The protein operates within purine metabolism; IMP biosynthesis via de novo pathway; 5-formamido-1-(5-phospho-D-ribosyl)imidazole-4-carboxamide from 5-amino-1-(5-phospho-D-ribosyl)imidazole-4-carboxamide (10-formyl THF route): step 1/1. Its pathway is purine metabolism; IMP biosynthesis via de novo pathway; IMP from 5-formamido-1-(5-phospho-D-ribosyl)imidazole-4-carboxamide: step 1/1. The protein is Bifunctional purine biosynthesis protein PurH of Bacillus mycoides (strain KBAB4) (Bacillus weihenstephanensis).